The following is a 327-amino-acid chain: Aromatase (327 aa).

Cys315 contacts heme.

Belongs to the cytochrome P450 family. Requires heme as cofactor.

The protein localises to the membrane. It catalyses the reaction testosterone + 3 reduced [NADPH--hemoprotein reductase] + 3 O2 = 17beta-estradiol + formate + 3 oxidized [NADPH--hemoprotein reductase] + 4 H2O + 4 H(+). It carries out the reaction androst-4-ene-3,17-dione + 3 reduced [NADPH--hemoprotein reductase] + 3 O2 = estrone + formate + 3 oxidized [NADPH--hemoprotein reductase] + 4 H2O + 4 H(+). Catalyzes the formation of aromatic C18 estrogens from C19 androgens. This chain is Aromatase (CYP19A1), found in Coturnix japonica (Japanese quail).